The chain runs to 238 residues: Ribonuclease PH (238 aa).

Phosphate-binding positions include Arg-86 and 124–126 (GTR).

Belongs to the RNase PH family. As to quaternary structure, homohexameric ring arranged as a trimer of dimers.

It catalyses the reaction tRNA(n+1) + phosphate = tRNA(n) + a ribonucleoside 5'-diphosphate. In terms of biological role, phosphorolytic 3'-5' exoribonuclease that plays an important role in tRNA 3'-end maturation. Removes nucleotide residues following the 3'-CCA terminus of tRNAs; can also add nucleotides to the ends of RNA molecules by using nucleoside diphosphates as substrates, but this may not be physiologically important. Probably plays a role in initiation of 16S rRNA degradation (leading to ribosome degradation) during starvation. The protein is Ribonuclease PH of Brucella melitensis biotype 2 (strain ATCC 23457).